The following is a 1083-amino-acid chain: Histone-lysine N-methyltransferase ATX2 (1083 aa).

The short motif at 77–84 (HRRPEIVH) is the Nuclear localization signal element. The region spanning 315–379 (PRDIIWAKLT…VKQAVSFLKG (65 aa)) is the PWWP domain. The segment at 422–443 (TDCSERINSGEEDSSNSGDDYT) is disordered. The region spanning 457 to 516 (DCLHRIGDLQIINLGRIVTDSEFFKDSKHTWPEGYTATRKFISLKDPNASAMYKMEVLRD) is the FYR N-terminal domain. An FYR C-terminal domain is found at 520 to 604 (KTRPVFRVTT…PPSKVSQRKY (85 aa)). A PHD-type 1 zinc finger spans residues 626-677 (LDKCNVCHMDEEYENNLFLQCDKCRMMVHTRCYGQLEPHNGILWLCNLCRPV). The C2HC pre-PHD-type zinc finger occupies 682 to 715 (PPRCCLCPVVGGAMKPTTDGRWAHLACAIWIPET). Positions 682 to 807 (PPRCCLCPVV…RLLSFCKRHR (126 aa)) are extended PHD domain (ePHD). A PHD-type 2 zinc finger spans residues 739-807 (LLCSICGVSY…RLLSFCKRHR (69 aa)). In terms of domain architecture, SET spans 919–1037 (KRLAFGKSGI…KWEELTYDYR (119 aa)). Histidine 929 is a binding site for S-adenosyl-L-methionine. Serine 968 carries an O-linked (GlcNAc) serine glycan. S-adenosyl-L-methionine is bound by residues tyrosine 975 and 998 to 999 (NH). Residue cysteine 1001 coordinates Zn(2+). Tyrosine 1036 contributes to the S-adenosyl-L-methionine binding site. One can recognise a Post-SET domain in the interval 1043–1059 (ERLACYCGFPRCRGVVN). Zn(2+) is bound by residues cysteine 1047, cysteine 1049, and cysteine 1054.

The protein belongs to the class V-like SAM-binding methyltransferase superfamily. Histone-lysine methyltransferase family. TRX/MLL subfamily. Post-translationally, activated via O-glycosylation. In terms of tissue distribution, expressed in roots, leaves and flowers and, to a lower extent, in young seedlings.

The protein localises to the nucleus. It catalyses the reaction N(6)-methyl-L-lysyl-[histone] + S-adenosyl-L-methionine = N(6),N(6)-dimethyl-L-lysyl-[histone] + S-adenosyl-L-homocysteine + H(+). Histone methyltransferase. Dimethylates 'Lys-4' of histone H3 (H3K4me2). H3 'Lys-4' methylation represents a specific tag for epigenetic transcriptional activation. Methylates only a limited fraction of nucleosomes of target genes (e.g. NAP and XTH33). Involved in epigenetic regulation of the floral repressor FLC and FT to prevent the transition from vegetative to reproductive development. The chain is Histone-lysine N-methyltransferase ATX2 from Arabidopsis thaliana (Mouse-ear cress).